The sequence spans 312 residues: Olfactory receptor 6Z7 (312 aa).

At 1–29 the chain is on the extracellular side; the sequence is MERSLALANMTRVQQFILLGLSTRLDIRD. Asparagine 9 carries N-linked (GlcNAc...) asparagine glycosylation. The chain crosses the membrane as a helical span at residues 30–50; the sequence is ALFAVFLTLYLLTLLENTLII. Topologically, residues 51–69 are cytoplasmic; it reads YLICSHKELHKPMYFFLGN. A helical transmembrane segment spans residues 70-90; it reads LSCLEMCYVSVTMPTLLMGLW. Position 91 (asparagine 91) is a topological domain, extracellular. A helical membrane pass occupies residues 92–112; the sequence is GLYHIPFIACMTQLFFFIVLV. Cysteine 101 and cysteine 193 are disulfide-bonded. Residues 113 to 141 lie on the Cytoplasmic side of the membrane; it reads GTECILLASMAYDRYVAICRPLHYPVLMR. A helical transmembrane segment spans residues 142–162; it reads PQVCLGLAMISWLGGLLVSMI. The Extracellular portion of the chain corresponds to 163–195; sequence KTTCIATLSYCGPNVLNHFFCDVSPLLNLSCTH. Asparagine 190 is a glycosylation site (N-linked (GlcNAc...) asparagine). Residues 196-216 form a helical membrane-spanning segment; that stretch reads VALTELVDFISAIVILWGCFL. Over 217–241 the chain is Cytoplasmic; the sequence is TTMASYVAIGRAVLRMPSTTARYKA. The chain crosses the membrane as a helical span at residues 242-262; that stretch reads FSTCASHLVVVGIFYSVTIFI. Residues 263–275 lie on the Extracellular side of the membrane; that stretch reads YARPKRIEAMDLN. Residues 276–296 form a helical membrane-spanning segment; that stretch reads KVLSVIYTVVTPMCNPVIYCL. The Cytoplasmic portion of the chain corresponds to 297 to 312; the sequence is RNKEVQVALHRTMHWS.

Belongs to the G-protein coupled receptor 1 family.

The protein localises to the cell membrane. In terms of biological role, odorant receptor. The sequence is that of Olfactory receptor 6Z7 from Mus musculus (Mouse).